The chain runs to 111 residues: Cell division protein FtsB (111 aa).

Over methionine 1–leucine 3 the chain is Cytoplasmic. Residues isoleucine 4–leucine 21 traverse the membrane as a helical segment. Topologically, residues glycine 22–histidine 111 are periplasmic. The stretch at aspartate 31–threonine 64 forms a coiled coil. The disordered stretch occupies residues alanine 89–histidine 111.

The protein belongs to the FtsB family. As to quaternary structure, part of a complex composed of FtsB, FtsL and FtsQ.

Its subcellular location is the cell inner membrane. Functionally, essential cell division protein. May link together the upstream cell division proteins, which are predominantly cytoplasmic, with the downstream cell division proteins, which are predominantly periplasmic. This is Cell division protein FtsB from Ralstonia pickettii (strain 12J).